A 518-amino-acid polypeptide reads, in one-letter code: Phosphoacetylglucosamine mutase 1 (518 aa).

Thr-49 carries the post-translational modification Phosphothreonine. Ser-51 functions as the Phosphoserine intermediate in the catalytic mechanism. Mg(2+)-binding residues include Ser-51, Asp-267, Asp-269, and Asp-271. Ser-51 is subject to Phosphoserine. Substrate contacts are provided by residues 360–362, 486–490, and Arg-495; these read EAN and RASGT.

This sequence belongs to the phosphohexose mutase family. Mg(2+) serves as cofactor.

It localises to the cytoplasm. The protein resides in the nucleus. The enzyme catalyses N-acetyl-alpha-D-glucosamine 1-phosphate = N-acetyl-D-glucosamine 6-phosphate. The protein operates within nucleotide-sugar biosynthesis; UDP-N-acetyl-alpha-D-glucosamine biosynthesis; N-acetyl-alpha-D-glucosamine 1-phosphate from alpha-D-glucosamine 6-phosphate (route I): step 2/2. In terms of biological role, catalyzes the conversion of GlcNAc-6-P into GlcNAc-1-P during the synthesis of uridine diphosphate/UDP-GlcNAc, which is a biosynthetic precursor of chitin and also supplies the amino sugars for N-linked oligosaccharides of glycoproteins. This is Phosphoacetylglucosamine mutase 1 from Schizosaccharomyces pombe (strain 972 / ATCC 24843) (Fission yeast).